The primary structure comprises 266 residues: Protein-ADP-ribose hydrolase (266 aa).

The Macro domain maps to 74 to 265 (TDLKDLKPIK…LYKEAFNRDA (192 aa)). 3 residues coordinate ADP-D-ribose: Asp93, Ile94, and Asn107. Zn(2+)-binding residues include Cys113, His118, and Cys120. 7 residues coordinate ADP-D-ribose: Cys120, Ile121, Asp122, Ser212, Thr213, Gly214, and Phe216.

The protein belongs to the MacroD-type family. Zn-Macro subfamily. Zn(2+) serves as cofactor.

The enzyme catalyses 4-O-(ADP-D-ribosyl)-L-aspartyl-[protein] + H2O = L-aspartyl-[protein] + ADP-D-ribose + H(+). Its function is as follows. ADP-ribosylhydrolase that specifically reverses the SirTM-mediated mono-ADP-ribosylation at an asparatate residue of GcvH-L, by releasing ADP-ribose from the target protein. May play a role in the regulation of the response to host-induced oxidative stress. The polypeptide is Protein-ADP-ribose hydrolase (Staphylococcus aureus (strain COL)).